A 359-amino-acid polypeptide reads, in one-letter code: Alanine racemase, biosynthetic (359 aa).

The Proton acceptor; specific for D-alanine role is filled by lysine 34. Lysine 34 bears the N6-(pyridoxal phosphate)lysine mark. A substrate-binding site is contributed by arginine 129. The Proton acceptor; specific for L-alanine role is filled by tyrosine 255. Methionine 303 provides a ligand contact to substrate.

The protein belongs to the alanine racemase family. Pyridoxal 5'-phosphate is required as a cofactor.

The enzyme catalyses L-alanine = D-alanine. It functions in the pathway amino-acid biosynthesis; D-alanine biosynthesis; D-alanine from L-alanine: step 1/1. The protein operates within cell wall biogenesis; peptidoglycan biosynthesis. Catalyzes the interconversion of L-alanine and D-alanine. Provides the D-alanine required for cell wall biosynthesis. This is Alanine racemase, biosynthetic (alr) from Escherichia coli O157:H7.